A 122-amino-acid chain; its full sequence is Large ribosomal subunit protein bL12 (122 aa).

This sequence belongs to the bacterial ribosomal protein bL12 family. In terms of assembly, homodimer. Part of the ribosomal stalk of the 50S ribosomal subunit. Forms a multimeric L10(L12)X complex, where L10 forms an elongated spine to which 2 to 4 L12 dimers bind in a sequential fashion. Binds GTP-bound translation factors.

In terms of biological role, forms part of the ribosomal stalk which helps the ribosome interact with GTP-bound translation factors. Is thus essential for accurate translation. The polypeptide is Large ribosomal subunit protein bL12 (Buchnera aphidicola subsp. Cinara cedri (strain Cc)).